The chain runs to 34 residues: DDIT3 upstream open reading frame protein (34 aa).

In terms of assembly, interacts with DDIT3 (isoform 1).

The protein localises to the nucleus. Its subcellular location is the cytoplasm. Its function is as follows. Product of the upstream open reading frame (uORF) of DDIT3/CHOP that is specifically produced in absence of stress, thereby preventing translation of downstream stress effector DDIT3/CHOP. The sequence is that of DDIT3 upstream open reading frame protein from Mus musculus (Mouse).